A 389-amino-acid polypeptide reads, in one-letter code: Chalcone synthase 6 (389 aa).

The active site involves cysteine 164.

It belongs to the thiolase-like superfamily. Chalcone/stilbene synthases family.

The catalysed reaction is (E)-4-coumaroyl-CoA + 3 malonyl-CoA + 3 H(+) = 2',4,4',6'-tetrahydroxychalcone + 3 CO2 + 4 CoA. It functions in the pathway secondary metabolite biosynthesis; flavonoid biosynthesis. In terms of biological role, the primary product of this enzyme is 4,2',4',6'-tetrahydroxychalcone (also termed naringenin-chalcone or chalcone) which can under specific conditions spontaneously isomerize into naringenin. The polypeptide is Chalcone synthase 6 (CHS6) (Pisum sativum (Garden pea)).